Consider the following 648-residue polypeptide: Macrolide export ATP-binding/permease protein MacB (648 aa).

Positions 5–243 constitute an ABC transporter domain; the sequence is LELCNVSRSY…QGVDAAVVNT (239 aa). Position 41–48 (41–48) interacts with ATP; it reads GVSGSGKS. 5 helical membrane-spanning segments follow: residues 273–293, 417–437, 523–543, 577–597, and 611–631; these read LLTMLGIIIGIASVVSIVVVG, ANVVGEVVLVGNMPVIVIGVA, LFLTLVAVISLVVGGIGVMNI, VLVCLVGGALGISLSMFIAFM, and LTALASAFLCSTFTGILFGWL.

It belongs to the ABC transporter superfamily. Macrolide exporter (TC 3.A.1.122) family. Homodimer. Part of the tripartite efflux system MacAB-TolC, which is composed of an inner membrane transporter, MacB, a periplasmic membrane fusion protein, MacA, and an outer membrane component, TolC. The complex forms a large protein conduit and can translocate molecules across both the inner and outer membranes. Interacts with MacA.

The protein localises to the cell inner membrane. In terms of biological role, part of the tripartite efflux system MacAB-TolC. MacB is a non-canonical ABC transporter that contains transmembrane domains (TMD), which form a pore in the inner membrane, and an ATP-binding domain (NBD), which is responsible for energy generation. Confers resistance against macrolides. This chain is Macrolide export ATP-binding/permease protein MacB, found in Salmonella typhi.